A 124-amino-acid polypeptide reads, in one-letter code: Putative membrane protein insertion efficiency factor (124 aa).

It belongs to the UPF0161 family.

It is found in the cell inner membrane. Functionally, could be involved in insertion of integral membrane proteins into the membrane. This is Putative membrane protein insertion efficiency factor from Psychrobacter cryohalolentis (strain ATCC BAA-1226 / DSM 17306 / VKM B-2378 / K5).